The primary structure comprises 120 residues: NAD(P)H-quinone oxidoreductase subunit 3 (120 aa).

Helical transmembrane passes span glycine 6–valine 26, methionine 64–valine 84, and leucine 89–alanine 109.

It belongs to the complex I subunit 3 family. NDH-1 can be composed of about 15 different subunits; different subcomplexes with different compositions have been identified which probably have different functions.

It localises to the cellular thylakoid membrane. It catalyses the reaction a plastoquinone + NADH + (n+1) H(+)(in) = a plastoquinol + NAD(+) + n H(+)(out). The enzyme catalyses a plastoquinone + NADPH + (n+1) H(+)(in) = a plastoquinol + NADP(+) + n H(+)(out). In terms of biological role, NDH-1 shuttles electrons from an unknown electron donor, via FMN and iron-sulfur (Fe-S) centers, to quinones in the respiratory and/or the photosynthetic chain. The immediate electron acceptor for the enzyme in this species is believed to be plastoquinone. Couples the redox reaction to proton translocation, and thus conserves the redox energy in a proton gradient. Cyanobacterial NDH-1 also plays a role in inorganic carbon-concentration. This is NAD(P)H-quinone oxidoreductase subunit 3 from Synechococcus sp. (strain WH7803).